The chain runs to 398 residues: Cell adhesion molecule 3 (398 aa).

An N-terminal signal peptide occupies residues 1-24 (MGAPAASLLLLLLLFACCWAPGGA). An Ig-like V-type domain is found at 25 to 126 (NLSQDDSQPW…VRTAKSLVTV (102 aa)). Over 25–330 (NLSQDDSQPW…PVPSSSSTYH (306 aa)) the chain is Extracellular. Disulfide bonds link cysteine 50–cysteine 110, cysteine 152–cysteine 209, and cysteine 254–cysteine 299. Ig-like C2-type domains lie at 130–228 (PQKP…QRIE) and 233–315 (PTAM…YTLN). N-linked (GlcNAc...) asparagine glycosylation occurs at asparagine 290. A helical membrane pass occupies residues 331 to 351 (AIIGGIVAFIVFLLLIMLIFL). Over 352-398 (GHYLIRHKGTYLTHEAKGSDDAPDADTAIINAEGGQSGGDDKKEYFI) the chain is Cytoplasmic. Residues 367 to 398 (AKGSDDAPDADTAIINAEGGQSGGDDKKEYFI) are disordered. A Phosphoserine modification is found at serine 388.

Belongs to the nectin family. Homodimer. Can form trans-heterodimers with NECTIN3. Interacts with EPB41L1, DLG3, PALS2 and CASK. Isoform 1 is expressed mainly in adult and fetal brain. Isoform 2 is highly expressed in adult brain and weakly expressed in placenta. In brain, Isoform 2 is highly expressed in cerebellum.

It is found in the cell membrane. Its subcellular location is the cell junction. Its function is as follows. Involved in cell-cell adhesion. Has both calcium-independent homophilic cell-cell adhesion activity and calcium-independent heterophilic cell-cell adhesion activity with IGSF4, NECTIN1 and NECTIN3. Interaction with EPB41L1 may regulate structure or function of cell-cell junctions. The polypeptide is Cell adhesion molecule 3 (CADM3) (Homo sapiens (Human)).